The chain runs to 179 residues: Large ribosomal subunit protein uL5 (179 aa).

The protein belongs to the universal ribosomal protein uL5 family. In terms of assembly, part of the 50S ribosomal subunit; part of the 5S rRNA/L5/L18/L25 subcomplex. Contacts the 5S rRNA and the P site tRNA. Forms a bridge to the 30S subunit in the 70S ribosome.

Its function is as follows. This is one of the proteins that bind and probably mediate the attachment of the 5S RNA into the large ribosomal subunit, where it forms part of the central protuberance. In the 70S ribosome it contacts protein S13 of the 30S subunit (bridge B1b), connecting the 2 subunits; this bridge is implicated in subunit movement. Contacts the P site tRNA; the 5S rRNA and some of its associated proteins might help stabilize positioning of ribosome-bound tRNAs. This is Large ribosomal subunit protein uL5 from Aliivibrio salmonicida (strain LFI1238) (Vibrio salmonicida (strain LFI1238)).